Here is a 950-residue protein sequence, read N- to C-terminus: Protocadherin alpha-6 (950 aa).

The first 29 residues, 1 to 29, serve as a signal peptide directing secretion; it reads MVFTPEDRLGKQCLLLPLLLLAAWKVGSG. Over 30-697 the chain is Extracellular; sequence QLHYSVPEEA…GPEAALVDVN (668 aa). Cadherin domains follow at residues 34–133, 157–242, 243–350, 351–455, 456–565, and 581–678; these read SVPE…PPLF, ASDA…APTF, EQSE…VPEI, ALTS…APAF, AQPE…APAL, and VPRS…APKA. Residues N257, N265, N386, and N548 are each glycosylated (N-linked (GlcNAc...) asparagine). The chain crosses the membrane as a helical span at residues 698-718; the sequence is VYLIIAICAVSSLLVLTLLLY. The Cytoplasmic portion of the chain corresponds to 719 to 950; the sequence is TALRCSAPPT…GNSTTDNSDQ (232 aa). PXXP repeat units follow at residues 799–802, 832–835, 873–876, and 891–894; these read PRQP, PGGP, PGNP, and PGSP. Residues 799–894 are 4 X 4 AA repeats of P-X-X-P; sequence PRQPNPDWRY…PDKFIIPGSP (96 aa). The tract at residues 830–950 is disordered; that stretch reads AGPGGPDQQW…GNSTTDNSDQ (121 aa). Residues 909–923 show a composition bias toward basic and acidic residues; it reads DKSDFITFGKKEETK.

It is found in the cell membrane. The protein localises to the secreted. Potential calcium-dependent cell-adhesion protein. May be involved in the establishment and maintenance of specific neuronal connections in the brain. This is Protocadherin alpha-6 (PCDHA6) from Homo sapiens (Human).